A 429-amino-acid polypeptide reads, in one-letter code: Histidine--tRNA ligase (429 aa).

The protein belongs to the class-II aminoacyl-tRNA synthetase family. As to quaternary structure, homodimer.

The protein resides in the cytoplasm. It carries out the reaction tRNA(His) + L-histidine + ATP = L-histidyl-tRNA(His) + AMP + diphosphate + H(+). The protein is Histidine--tRNA ligase of Pseudomonas aeruginosa (strain UCBPP-PA14).